Here is a 160-residue protein sequence, read N- to C-terminus: Cytochrome b6-f complex subunit 4 (160 aa).

3 consecutive transmembrane segments (helical) span residues 36–56 (LLYI…GLAV), 95–115 (LLGV…PFLE), and 131–151 (TVFL…ALPI).

It belongs to the cytochrome b family. PetD subfamily. As to quaternary structure, the 4 large subunits of the cytochrome b6-f complex are cytochrome b6, subunit IV (17 kDa polypeptide, petD), cytochrome f and the Rieske protein, while the 4 small subunits are petG, petL, petM and petN. The complex functions as a dimer.

The protein localises to the plastid. The protein resides in the chloroplast thylakoid membrane. Functionally, component of the cytochrome b6-f complex, which mediates electron transfer between photosystem II (PSII) and photosystem I (PSI), cyclic electron flow around PSI, and state transitions. The polypeptide is Cytochrome b6-f complex subunit 4 (Psilotum nudum (Whisk fern)).